We begin with the raw amino-acid sequence, 249 residues long: Ubiquinone/menaquinone biosynthesis C-methyltransferase UbiE (249 aa).

S-adenosyl-L-methionine is bound by residues Thr-72, Asp-93, and 121–122 (DA).

It belongs to the class I-like SAM-binding methyltransferase superfamily. MenG/UbiE family.

It catalyses the reaction a 2-demethylmenaquinol + S-adenosyl-L-methionine = a menaquinol + S-adenosyl-L-homocysteine + H(+). The catalysed reaction is a 2-methoxy-6-(all-trans-polyprenyl)benzene-1,4-diol + S-adenosyl-L-methionine = a 5-methoxy-2-methyl-3-(all-trans-polyprenyl)benzene-1,4-diol + S-adenosyl-L-homocysteine + H(+). Its pathway is quinol/quinone metabolism; menaquinone biosynthesis; menaquinol from 1,4-dihydroxy-2-naphthoate: step 2/2. It participates in cofactor biosynthesis; ubiquinone biosynthesis. In terms of biological role, methyltransferase required for the conversion of demethylmenaquinol (DMKH2) to menaquinol (MKH2) and the conversion of 2-polyprenyl-6-methoxy-1,4-benzoquinol (DDMQH2) to 2-polyprenyl-3-methyl-6-methoxy-1,4-benzoquinol (DMQH2). This is Ubiquinone/menaquinone biosynthesis C-methyltransferase UbiE from Teredinibacter turnerae (strain ATCC 39867 / T7901).